Here is a 328-residue protein sequence, read N- to C-terminus: Ferredoxin--NADP reductase (328 aa).

Glu-34, Gln-42, Tyr-47, Val-87, Phe-120, Asp-283, and Thr-323 together coordinate FAD.

The protein belongs to the ferredoxin--NADP reductase type 2 family. Homodimer. FAD serves as cofactor.

It carries out the reaction 2 reduced [2Fe-2S]-[ferredoxin] + NADP(+) + H(+) = 2 oxidized [2Fe-2S]-[ferredoxin] + NADPH. The polypeptide is Ferredoxin--NADP reductase (Pediococcus pentosaceus (strain ATCC 25745 / CCUG 21536 / LMG 10740 / 183-1w)).